The following is a 62-amino-acid chain: Photosystem II reaction center protein Z (62 aa).

The next 2 membrane-spanning stretches (helical) occupy residues 8 to 28 (AVFA…VVLA) and 41 to 61 (FSGA…NSFI).

This sequence belongs to the PsbZ family. In terms of assembly, PSII is composed of 1 copy each of membrane proteins PsbA, PsbB, PsbC, PsbD, PsbE, PsbF, PsbH, PsbI, PsbJ, PsbK, PsbL, PsbM, PsbT, PsbY, PsbZ, Psb30/Ycf12, at least 3 peripheral proteins of the oxygen-evolving complex and a large number of cofactors. It forms dimeric complexes.

The protein localises to the plastid. Its subcellular location is the chloroplast thylakoid membrane. May control the interaction of photosystem II (PSII) cores with the light-harvesting antenna, regulates electron flow through the 2 photosystem reaction centers. PSII is a light-driven water plastoquinone oxidoreductase, using light energy to abstract electrons from H(2)O, generating a proton gradient subsequently used for ATP formation. This chain is Photosystem II reaction center protein Z, found in Anthoceros angustus (Hornwort).